A 187-amino-acid chain; its full sequence is Troponin I, slow skeletal muscle (187 aa).

Proline 2 is subject to N-acetylproline. The interval 2 to 48 (PEVERKSKITASRKLMLKSLMLAKAKECWEQEHEEREAEKVRYLSER) is involved in binding TNC. At serine 58 the chain carries Phosphoserine. The interval 97–118 (LKLKVLDLRGKFKRPPLRRVRV) is involved in binding TNC and actin.

The protein belongs to the troponin I family. In terms of assembly, binds to actin and tropomyosin.

Functionally, troponin I is the inhibitory subunit of troponin, the thin filament regulatory complex which confers calcium-sensitivity to striated muscle actomyosin ATPase activity. The sequence is that of Troponin I, slow skeletal muscle (Tnni1) from Mus musculus (Mouse).